A 77-amino-acid polypeptide reads, in one-letter code: Small nuclear ribonucleoprotein G (77 aa).

The region spanning 4 to 76 (AGAPDLKKYL…VIMIETLDKM (73 aa)) is the Sm domain.

It belongs to the snRNP Sm proteins family. As to quaternary structure, belongs to the 40S cdc5-associated complex (or cwf complex), a spliceosome sub-complex reminiscent of a late-stage spliceosome composed of the U2, U5 and U6 snRNAs and at least brr2, cdc5, cwf2/prp3, cwf3/syf1, cwf4/syf3, cwf5/ecm2, spp42/cwf6, cwf7/spf27, cwf8, cwf9, cwf10, cwf11, cwf12, prp45/cwf13, cwf14, cwf15, cwf16, cwf17, cwf18, cwf19, cwf20, cwf21, cwf22, cwf23, cwf24, cwf25, cwf26, cyp7/cwf27, cwf28, cwf29/ist3, lea1, msl1, prp5/cwf1, prp10, prp12/sap130, prp17, prp22, sap61, sap62, sap114, sap145, slu7, smb1, smd1, smd3, smf1, smg1 and syf2.

The protein resides in the nucleus. It is found in the cytoplasm. In terms of biological role, plays a role in pre-mRNA splicing as a core component of the spliceosomal U1, U2, U4 and U5 small nuclear ribonucleoproteins (snRNPs), the building blocks of the spliceosome. The polypeptide is Small nuclear ribonucleoprotein G (smg1) (Schizosaccharomyces pombe (strain 972 / ATCC 24843) (Fission yeast)).